Consider the following 140-residue polypeptide: Organic hydroperoxide resistance protein-like (140 aa).

The protein belongs to the OsmC/Ohr family.

This is Organic hydroperoxide resistance protein-like from Mycoplasma genitalium (strain ATCC 33530 / DSM 19775 / NCTC 10195 / G37) (Mycoplasmoides genitalium).